Consider the following 320-residue polypeptide: tRNA U34 carboxymethyltransferase (320 aa).

Carboxy-S-adenosyl-L-methionine-binding positions include Lys-89, Trp-103, Lys-108, Gly-128, 150 to 152, 179 to 180, Met-194, Tyr-198, and Arg-313; these read DPT and IE.

This sequence belongs to the class I-like SAM-binding methyltransferase superfamily. CmoB family. As to quaternary structure, homotetramer.

The enzyme catalyses carboxy-S-adenosyl-L-methionine + 5-hydroxyuridine(34) in tRNA = 5-carboxymethoxyuridine(34) in tRNA + S-adenosyl-L-homocysteine + H(+). In terms of biological role, catalyzes carboxymethyl transfer from carboxy-S-adenosyl-L-methionine (Cx-SAM) to 5-hydroxyuridine (ho5U) to form 5-carboxymethoxyuridine (cmo5U) at position 34 in tRNAs. This chain is tRNA U34 carboxymethyltransferase, found in Actinobacillus pleuropneumoniae serotype 7 (strain AP76).